The chain runs to 824 residues: Glycerol-3-phosphate acyltransferase (824 aa).

The HXXXXD motif motif lies at 302–307 (CHRSHM).

This sequence belongs to the GPAT/DAPAT family.

It is found in the cell inner membrane. It carries out the reaction sn-glycerol 3-phosphate + an acyl-CoA = a 1-acyl-sn-glycero-3-phosphate + CoA. Its pathway is phospholipid metabolism; CDP-diacylglycerol biosynthesis; CDP-diacylglycerol from sn-glycerol 3-phosphate: step 1/3. The protein is Glycerol-3-phosphate acyltransferase of Actinobacillus pleuropneumoniae serotype 5b (strain L20).